The following is a 92-amino-acid chain: Small ribosomal subunit protein bS20 (92 aa).

Positions 1–23 (MANTTSAKKATRKIARRTDVNKA) are disordered.

It belongs to the bacterial ribosomal protein bS20 family.

Binds directly to 16S ribosomal RNA. In Rhizobium etli (strain CIAT 652), this protein is Small ribosomal subunit protein bS20.